Consider the following 206-residue polypeptide: Large ribosomal subunit protein uL4 (206 aa).

Residues 44-87 (KRQGTQKAKTRSEVRGGGRKPWRQKGTGHARQGSTRSPQWTGGG) form a disordered region. Residues 60–71 (GGRKPWRQKGTG) show a composition bias toward basic residues.

It belongs to the universal ribosomal protein uL4 family. As to quaternary structure, part of the 50S ribosomal subunit.

Its function is as follows. One of the primary rRNA binding proteins, this protein initially binds near the 5'-end of the 23S rRNA. It is important during the early stages of 50S assembly. It makes multiple contacts with different domains of the 23S rRNA in the assembled 50S subunit and ribosome. In terms of biological role, forms part of the polypeptide exit tunnel. The polypeptide is Large ribosomal subunit protein uL4 (Agathobacter rectalis (strain ATCC 33656 / DSM 3377 / JCM 17463 / KCTC 5835 / VPI 0990) (Eubacterium rectale)).